We begin with the raw amino-acid sequence, 317 residues long: Melanocyte-stimulating hormone receptor (317 aa).

Residues 1–37 (MPMQGAQRRLLGSLNSTPTATPNLGLAANHTGAPCLE) are Extracellular-facing. N-linked (GlcNAc...) asparagine glycosylation is present at N29. Residues 38 to 63 (VSIPDGLFLSLGLVSLVENVLVVAAI) traverse the membrane as a helical segment. The Cytoplasmic portion of the chain corresponds to 64-72 (AKNRNLHSP). A helical transmembrane segment spans residues 73–93 (MYCFICCLALSDLLVSGSNML). The Extracellular portion of the chain corresponds to 94–118 (EMAVILLLEAGALATRASVVQQLQN). The helical transmembrane segment at 119-140 (TIDVLTCSSMLCSLCFLGAIAV) threads the bilayer. Topologically, residues 141–163 (DRYVSIFYALRYHSIVTLPRARR) are cytoplasmic. A helical transmembrane segment spans residues 164-183 (AIAAIWVASVLSSTLFIAYC). Residues 184 to 191 (DHAAVLLC) lie on the Extracellular side of the membrane. Residues 192–211 (LVVFFLAMLVLMAVLYVHML) form a helical membrane-spanning segment. The Cytoplasmic portion of the chain corresponds to 212–240 (ARACQHAQGITRLHKRQLPAHQGFGLRGA). The helical transmembrane segment at 241 to 266 (ATLTILLGIFFVCWGPFFLHLMLVVL) threads the bilayer. The Extracellular portion of the chain corresponds to 267–279 (CPQHLTCSCIFKN). The chain crosses the membrane as a helical span at residues 280 to 300 (FKVFLTLIICNTIIDPLIYAF). Residues 301-317 (RSQELCRTLKEVLLCSW) are Cytoplasmic-facing. C315 carries the S-palmitoyl cysteine lipid modification.

The protein belongs to the G-protein coupled receptor 1 family. Interacts with MGRN1, but does not undergo MGRN1-mediated ubiquitination; this interaction competes with GNAS-binding and thus inhibits agonist-induced cAMP production. Interacts with OPN3; the interaction results in a decrease in MC1R-mediated cAMP signaling and ultimately a decrease in melanin production in melanocytes.

Its subcellular location is the cell membrane. In terms of biological role, receptor for MSH (alpha, beta and gamma) and ACTH. The activity of this receptor is mediated by G proteins which activate adenylate cyclase. Mediates melanogenesis, the production of eumelanin (black/brown) and phaeomelanin (red/yellow), via regulation of cAMP signaling in melanocytes. This is Melanocyte-stimulating hormone receptor (MC1R) from Alouatta sara (Bolivian red howler monkey).